Here is a 923-residue protein sequence, read N- to C-terminus: Helicase POLQ-like (923 aa).

The tract at residues methionine 1–isoleucine 84 is disordered. Low complexity predominate over residues serine 43 to asparagine 55. A Helicase ATP-binding domain is found at aspartate 178–asparagine 349. Residue leucine 191–threonine 198 coordinates ATP. A DEAH box motif is present at residues aspartate 295 to histidine 298. Residues glycine 392–isoleucine 596 enclose the Helicase C-terminal domain.

It belongs to the helicase family. SKI2 subfamily.

The protein localises to the nucleus. The protein resides in the chromosome. It catalyses the reaction Couples ATP hydrolysis with the unwinding of duplex DNA by translocating in the 3'-5' direction.. The catalysed reaction is ATP + H2O = ADP + phosphate + H(+). Functionally, single-stranded 3'-5' DNA helicase that plays a key role in homology-driven double-strand break (DSB) repair. Involved in different DSB repair mechanisms that are guided by annealing of extensive stretches of complementary bases at break ends, such as microhomology-mediated end-joining (MMEJ), single-strand annealing (SSA) or synthesis-dependent strand annealing (SDSA). In Caenorhabditis elegans, this protein is Helicase POLQ-like.